The chain runs to 262 residues: Hydroxyethylthiazole kinase (262 aa).

Residue methionine 44 coordinates substrate. Arginine 118 and threonine 166 together coordinate ATP. Residue glycine 193 coordinates substrate.

This sequence belongs to the Thz kinase family. Mg(2+) is required as a cofactor.

It catalyses the reaction 5-(2-hydroxyethyl)-4-methylthiazole + ATP = 4-methyl-5-(2-phosphooxyethyl)-thiazole + ADP + H(+). Its pathway is cofactor biosynthesis; thiamine diphosphate biosynthesis; 4-methyl-5-(2-phosphoethyl)-thiazole from 5-(2-hydroxyethyl)-4-methylthiazole: step 1/1. Catalyzes the phosphorylation of the hydroxyl group of 4-methyl-5-beta-hydroxyethylthiazole (THZ). This chain is Hydroxyethylthiazole kinase, found in Chlamydia caviae (strain ATCC VR-813 / DSM 19441 / 03DC25 / GPIC) (Chlamydophila caviae).